The sequence spans 522 residues: Protein nucleotidyltransferase YdiU (522 aa).

Residues glycine 109, glycine 111, arginine 112, lysine 132, aspartate 144, glycine 145, arginine 195, and arginine 202 each contribute to the ATP site. Aspartate 271 serves as the catalytic Proton acceptor. Residues asparagine 272 and aspartate 281 each coordinate Mg(2+). Aspartate 281 provides a ligand contact to ATP.

The protein belongs to the SELO family. Mg(2+) serves as cofactor. Mn(2+) is required as a cofactor.

It carries out the reaction L-seryl-[protein] + ATP = 3-O-(5'-adenylyl)-L-seryl-[protein] + diphosphate. The catalysed reaction is L-threonyl-[protein] + ATP = 3-O-(5'-adenylyl)-L-threonyl-[protein] + diphosphate. The enzyme catalyses L-tyrosyl-[protein] + ATP = O-(5'-adenylyl)-L-tyrosyl-[protein] + diphosphate. It catalyses the reaction L-histidyl-[protein] + UTP = N(tele)-(5'-uridylyl)-L-histidyl-[protein] + diphosphate. It carries out the reaction L-seryl-[protein] + UTP = O-(5'-uridylyl)-L-seryl-[protein] + diphosphate. The catalysed reaction is L-tyrosyl-[protein] + UTP = O-(5'-uridylyl)-L-tyrosyl-[protein] + diphosphate. Functionally, nucleotidyltransferase involved in the post-translational modification of proteins. It can catalyze the addition of adenosine monophosphate (AMP) or uridine monophosphate (UMP) to a protein, resulting in modifications known as AMPylation and UMPylation. The polypeptide is Protein nucleotidyltransferase YdiU (Burkholderia vietnamiensis (strain G4 / LMG 22486) (Burkholderia cepacia (strain R1808))).